Here is a 243-residue protein sequence, read N- to C-terminus: PF03932 family protein CutC (243 aa).

The protein belongs to the CutC family.

The protein localises to the cytoplasm. The polypeptide is PF03932 family protein CutC (Glaesserella parasuis serovar 5 (strain SH0165) (Haemophilus parasuis)).